The primary structure comprises 446 residues: D-inositol 3-phosphate glycosyltransferase (446 aa).

The interval 1-21 (MSHYVGRLGRRSPAGSGRLRL) is disordered. H34 provides a ligand contact to 1D-myo-inositol 3-phosphate. UDP-N-acetyl-alpha-D-glucosamine is bound by residues 40–41 (QP) and G48. 1D-myo-inositol 3-phosphate contacts are provided by residues 45–50 (DAGGMN), K103, Y136, T160, and R180. Residues R255, K260, and V321 each coordinate UDP-N-acetyl-alpha-D-glucosamine. Positions 330, 331, and 333 each coordinate Mg(2+). The UDP-N-acetyl-alpha-D-glucosamine site is built by E343 and E351. Residue T357 participates in Mg(2+) binding.

This sequence belongs to the glycosyltransferase group 1 family. MshA subfamily. Homodimer.

The catalysed reaction is 1D-myo-inositol 3-phosphate + UDP-N-acetyl-alpha-D-glucosamine = 1D-myo-inositol 2-acetamido-2-deoxy-alpha-D-glucopyranoside 3-phosphate + UDP + H(+). Functionally, catalyzes the transfer of a N-acetyl-glucosamine moiety to 1D-myo-inositol 3-phosphate to produce 1D-myo-inositol 2-acetamido-2-deoxy-glucopyranoside 3-phosphate in the mycothiol biosynthesis pathway. The chain is D-inositol 3-phosphate glycosyltransferase from Streptomyces scabiei (strain 87.22).